We begin with the raw amino-acid sequence, 37 residues long: Potassium channel toxin alpha-KTx 15.1 (37 aa).

Residue Q1 is modified to Pyrrolidone carboxylic acid. Cystine bridges form between C8–C28, C13–C33, and C17–C35.

It belongs to the short scorpion toxin superfamily. Potassium channel inhibitor family. Alpha-KTx 15 subfamily. As to expression, expressed by the venom gland.

The protein resides in the secreted. In terms of biological role, blocker of voltage-gated potassium channels (600 nM of the toxin induces a block of 25% of hERG currents). May also inhibit Kv4/KCND when coexpressed with DPP6 or DPP10. In adult rat brain, it blocks the transient potassium channels in cerebellum granular cells. Blocks potassium channels by a simple 'plugging mechanism', in which a single toxin molecule finds a specific receptor site in the external vestibule of the potassium channel and thereby occludes the outer entry to the potassium conducting pore. This chain is Potassium channel toxin alpha-KTx 15.1, found in Androctonus australis (Sahara scorpion).